Here is a 353-residue protein sequence, read N- to C-terminus: Photosystem II protein D1 (353 aa).

Residue Thr2 is modified to N-acetylthreonine. Thr2 carries the post-translational modification Phosphothreonine. 3 helical membrane passes run 29–46 (YIGWFGVLMIPTLLTATS), 118–133 (HFLLGVACYMGREWEL), and 142–156 (WIAVAYSAPVAAATA). His118 is a chlorophyll a binding site. Tyr126 provides a ligand contact to pheophytin a. Residues Asp170 and Glu189 each contribute to the [CaMn4O5] cluster site. The helical transmembrane segment at 197 to 218 (FHMLGVAGVFGGSLFSAMHGSL) threads the bilayer. His198 contacts chlorophyll a. A quinone-binding positions include His215 and 264–265 (SF). Residue His215 coordinates Fe cation. Residue His272 participates in Fe cation binding. Residues 274–288 (FLTAWPVVGIWFTAL) form a helical membrane-spanning segment. 4 residues coordinate [CaMn4O5] cluster: His332, Glu333, Asp342, and Ala344. Residues 345–353 (AVEAPSTNG) constitute a propeptide that is removed on maturation.

It belongs to the reaction center PufL/M/PsbA/D family. In terms of assembly, PSII is composed of 1 copy each of membrane proteins PsbA, PsbB, PsbC, PsbD, PsbE, PsbF, PsbH, PsbI, PsbJ, PsbK, PsbL, PsbM, PsbT, PsbX, PsbY, PsbZ, Psb30/Ycf12, at least 3 peripheral proteins of the oxygen-evolving complex and a large number of cofactors. It forms dimeric complexes. It depends on The D1/D2 heterodimer binds P680, chlorophylls that are the primary electron donor of PSII, and subsequent electron acceptors. It shares a non-heme iron and each subunit binds pheophytin, quinone, additional chlorophylls, carotenoids and lipids. D1 provides most of the ligands for the Mn4-Ca-O5 cluster of the oxygen-evolving complex (OEC). There is also a Cl(-1) ion associated with D1 and D2, which is required for oxygen evolution. The PSII complex binds additional chlorophylls, carotenoids and specific lipids. as a cofactor. Post-translationally, tyr-161 forms a radical intermediate that is referred to as redox-active TyrZ, YZ or Y-Z. In terms of processing, C-terminally processed by CTPA; processing is essential to allow assembly of the oxygen-evolving complex and thus photosynthetic growth.

It is found in the plastid. It localises to the chloroplast thylakoid membrane. It carries out the reaction 2 a plastoquinone + 4 hnu + 2 H2O = 2 a plastoquinol + O2. In terms of biological role, photosystem II (PSII) is a light-driven water:plastoquinone oxidoreductase that uses light energy to abstract electrons from H(2)O, generating O(2) and a proton gradient subsequently used for ATP formation. It consists of a core antenna complex that captures photons, and an electron transfer chain that converts photonic excitation into a charge separation. The D1/D2 (PsbA/PsbD) reaction center heterodimer binds P680, the primary electron donor of PSII as well as several subsequent electron acceptors. This is Photosystem II protein D1 from Barbarea verna (Land cress).